An 805-amino-acid polypeptide reads, in one-letter code: MSKFFVNVAPINNSNSSSSHTTTSSNTQRHQQHQQHYGGSGTTGHTMVARRLNYDLHGGTTSINNNNNIVIKNESVDLDYDHVLSSSDSNSNGGVAAHLRDHVYISLDKGHNTGAVATAAAAATAGHTQQQLQQQHHHQNQQQRKATGKSNDITNYYKVKRRPHAVSDEIHPKKQAKQSAHHQTVYQKHTASSAPQQLRHSHHQLRHDADAELDEDVVERVAKPASHHPFSLSTPQQQLAASVASSSSSGDRNRADTSLGILTKKFVDLLQESPDGVVDLNEASNRLHVQKRRIYDITNVLEGINILEKKSKNNIQWRCGQSMVSQERSRHIEADSLRLEQQENELNKAIDLMRENLAEISQEVENSGGMAYVTQNDLLNVDLFKDQIVIVIKAPPEAKLVLPNTKLPREIYVKAENSGEINVFLCHDTSPENSPIAPGAGYVGAPGAGCVRTATSTRLHPLTNQRLNDPLFNNIDAMSTKGLFQTPYRSARNLSKSIEEAAKQSQPEYNNICDIAMGQHHNLNQQQQQQQQQLLQQPEEDDVDVELNQLVPTLTNPVVRTHQFQQHQQPSIQELFSSLTESSPPTPTKRRREAAAAAIAAGSSTTATTTLNSHNNRNHSNHSNHSNHSSSNNSKSQPPTIGYGSSQRRSDVPMYNCAMEGATTTSATADTTAATSRSAAASSLQMQFAAVAESNNGSSSGGGGGGGGYGSIAGAGANADPHQPYSHDRNSLPPGVADCDANSNSSSVTLQGLDALFNDIGSDYFSNDIAFVSINPPDDNDYPYALNANEGIDRLFDFGSDAYGP.

Disordered regions lie at residues 9 to 45 (APINNSNSSSSHTTTSSNTQRHQQHQQHYGGSGTTGH), 119 to 208 (AAAA…LRHD), and 224 to 255 (PASHHPFSLSTPQQQLAASVASSSSSGDRNRA). Low complexity-rich tracts occupy residues 12–37 (NNSNSSSSHTTTSSNTQRHQQHQQHY) and 119–134 (AAAAATAGHTQQQLQQ). Polar residues-rich tracts occupy residues 144 to 154 (RKATGKSNDIT) and 181 to 195 (HHQTVYQKHTASSAP). The PIP-box K+4 motif signature appears at 147–161 (TGKSNDITNYYKVKR). The span at 240 to 249 (AASVASSSSS) shows a compositional bias: low complexity. A DNA-binding region spans residues 253–318 (NRADTSLGIL…KKSKNNIQWR (66 aa)). The dimerization stretch occupies residues 318 to 411 (RCGQSMVSQE…LPNTKLPREI (94 aa)). Serine 434 is modified (phosphoserine). Disordered stretches follow at residues 578–650 (SLTE…QRRS) and 714–743 (GAGANADPHQPYSHDRNSLPPGVADCDANS). 2 stretches are compositionally biased toward low complexity: residues 595–615 (AAAAIAAGSSTTATTTLNSHN) and 623–636 (SNHSNHSSSNNSKS). Positions 637–647 (QPPTIGYGSSQ) are enriched in polar residues.

The protein belongs to the E2F/DP family. In terms of assembly, heterodimer of E2f and Dp. Cooperates to give sequence-specific DNA binding and optimal trans-activation. Interacts with PCNA. Ubiquitinated by the DCX(DTL) complex, also named CRL4(CDT2) complex, leading to its degradation during S phase. Ubiquitination by the DCX(DTL) complex is essential for cell cycle control and is PCNA-dependent: interacts with PCNA via its PIP-box, while the presence of the containing the 'K+4' motif in the PIP box, recruit the DCX(DTL) complex, leading to its degradation. In terms of tissue distribution, segmentally repeated expression throughout early embryos is restricted to the ventral nerve cord in later embryos.

Its subcellular location is the nucleus. In terms of biological role, transcriptional activator that binds to E2f sites. Required for wild-type growth in mitotic and polytene tissues, Contributes to the expression of replication genes at the G1-S transition and Cyclin E. Activates cell proliferation in wing imaginal disk, which requires expression of vg. The chain is Transcription factor E2f1 from Drosophila melanogaster (Fruit fly).